The chain runs to 375 residues: ATP-sensitive inward rectifier potassium channel 15 (375 aa).

The Cytoplasmic segment spans residues 1 to 60 (MDAIHIGMSSTPLVKHTAGAGLKANRPRVMSKSGHSNVRIDKVDGIYLLYLQDLWTTVID). Residues 61 to 87 (MKWRYKLTLFAATFVMTWFLFGVIYYA) traverse the membrane as a helical segment. The Extracellular portion of the chain corresponds to 88–113 (IAFIHGDLEPGEPISNHTPCIMKVDS). The segment at residues 114-130 (LTGAFLFSLESQTTIGY) is an intramembrane region (helical; Pore-forming). The Selectivity filter signature appears at 127 to 132 (TIGYGV). The Extracellular portion of the chain corresponds to 131 to 139 (GVRSITEEC). The helical transmembrane segment at 140–165 (PHAIFLLVAQLVITTLIEIFITGTFL) threads the bilayer. The Cytoplasmic segment spans residues 166–375 (AKIARPKKRA…RTLLLQQSNV (210 aa)).

This sequence belongs to the inward rectifier-type potassium channel (TC 1.A.2.1) family. KCNJ15 subfamily. Can form heteromultimeric channels with Kir5.1/KCNJ16. Interacts with PATJ.

Its subcellular location is the membrane. The protein resides in the cell membrane. The catalysed reaction is K(+)(in) = K(+)(out). With respect to regulation, channel activity is regulated by variations of cytosolic pH; reversibly inhibited by acidic pH values. Inhibited by Ba(2+) and Cs(+) in a voltage-dependent manner. Inward rectifier potassium channels are characterized by a greater tendency to allow potassium to flow into the cell rather than out of it. Their voltage dependence is regulated by the concentration of extracellular potassium; as external potassium is raised, the voltage range of the channel opening shifts to more positive voltages. The inward rectification is mainly due to the blockage of outward current by internal magnesium. This chain is ATP-sensitive inward rectifier potassium channel 15 (KCNJ15), found in Homo sapiens (Human).